The primary structure comprises 91 residues: RNA-binding protein Hfq (91 aa).

A Sm domain is found at 9 to 68 (DPFLNALRRERVPVSVYLVNGIKLQGTIESFDQFVVLLRNTVSQMVYKHAISTVVPARNV).

It belongs to the Hfq family. Homohexamer.

Its function is as follows. RNA chaperone that binds small regulatory RNA (sRNAs) and mRNAs to facilitate mRNA translational regulation in response to envelope stress, environmental stress and changes in metabolite concentrations. Also binds with high specificity to tRNAs. This Stenotrophomonas maltophilia (strain K279a) protein is RNA-binding protein Hfq.